Here is a 324-residue protein sequence, read N- to C-terminus: Beta-ketoacyl-[acyl-carrier-protein] synthase III (324 aa).

Catalysis depends on residues cysteine 114 and histidine 251. The segment at 252 to 256 (QANLR) is ACP-binding. Asparagine 281 is a catalytic residue.

It belongs to the thiolase-like superfamily. FabH family. As to quaternary structure, homodimer.

The protein localises to the cytoplasm. The enzyme catalyses malonyl-[ACP] + acetyl-CoA + H(+) = 3-oxobutanoyl-[ACP] + CO2 + CoA. Its pathway is lipid metabolism; fatty acid biosynthesis. Catalyzes the condensation reaction of fatty acid synthesis by the addition to an acyl acceptor of two carbons from malonyl-ACP. Catalyzes the first condensation reaction which initiates fatty acid synthesis and may therefore play a role in governing the total rate of fatty acid production. Possesses both acetoacetyl-ACP synthase and acetyl transacylase activities. Its substrate specificity determines the biosynthesis of branched-chain and/or straight-chain of fatty acids. In Rhodobacter capsulatus (Rhodopseudomonas capsulata), this protein is Beta-ketoacyl-[acyl-carrier-protein] synthase III.